A 396-amino-acid polypeptide reads, in one-letter code: Enoyl-[acyl-carrier-protein] reductase [NADH] (396 aa).

NAD(+) contacts are provided by residues 47–52 (GASTGF), 73–74 (FE), 110–111 (DA), and 138–139 (LA). Tyrosine 224 is a substrate binding site. Tyrosine 234 serves as the catalytic Proton donor. NAD(+) is bound by residues lysine 243 and 272-274 (LVT).

Belongs to the TER reductase family. In terms of assembly, monomer.

The enzyme catalyses a 2,3-saturated acyl-[ACP] + NAD(+) = a (2E)-enoyl-[ACP] + NADH + H(+). The protein operates within lipid metabolism; fatty acid biosynthesis. In terms of biological role, involved in the final reduction of the elongation cycle of fatty acid synthesis (FAS II). Catalyzes the reduction of a carbon-carbon double bond in an enoyl moiety that is covalently linked to an acyl carrier protein (ACP). The polypeptide is Enoyl-[acyl-carrier-protein] reductase [NADH] (Flavobacterium johnsoniae (strain ATCC 17061 / DSM 2064 / JCM 8514 / BCRC 14874 / CCUG 350202 / NBRC 14942 / NCIMB 11054 / UW101) (Cytophaga johnsonae)).